A 673-amino-acid chain; its full sequence is UvrABC system protein B (673 aa).

The Helicase ATP-binding domain occupies 26–183 (EGLEDGLAHQ…RRLAELQYTR (158 aa)). 39–46 (GVTGSGKT) is an ATP binding site. A Beta-hairpin motif is present at residues 92–115 (YYDYYQPEAYVPSSDTFIEKDASV). Residues 431–597 (QVDDLLSEIR…GLNKKVVDIL (167 aa)) form the Helicase C-terminal domain. In terms of domain architecture, UVR spans 633-668 (QQKIHELEGQMMQHAQNLEFEEAAQIRDQLHQLREL).

The protein belongs to the UvrB family. In terms of assembly, forms a heterotetramer with UvrA during the search for lesions. Interacts with UvrC in an incision complex.

It is found in the cytoplasm. In terms of biological role, the UvrABC repair system catalyzes the recognition and processing of DNA lesions. A damage recognition complex composed of 2 UvrA and 2 UvrB subunits scans DNA for abnormalities. Upon binding of the UvrA(2)B(2) complex to a putative damaged site, the DNA wraps around one UvrB monomer. DNA wrap is dependent on ATP binding by UvrB and probably causes local melting of the DNA helix, facilitating insertion of UvrB beta-hairpin between the DNA strands. Then UvrB probes one DNA strand for the presence of a lesion. If a lesion is found the UvrA subunits dissociate and the UvrB-DNA preincision complex is formed. This complex is subsequently bound by UvrC and the second UvrB is released. If no lesion is found, the DNA wraps around the other UvrB subunit that will check the other stand for damage. This is UvrABC system protein B from Klebsiella pneumoniae (strain 342).